The sequence spans 394 residues: Guanine nucleotide-binding protein G(s) subunit alpha (394 aa).

The disordered stretch occupies residues 1–23 (MGCLGNSKTEDQRNEEKAQREAN). Gly2 is lipidated: N-palmitoyl glycine. Cys3 carries S-palmitoyl cysteine lipidation. The segment covering 8-23 (KTEDQRNEEKAQREAN) has biased composition (basic and acidic residues). The 356-residue stretch at 39–394 (ATHRLLLLGA…RMHLRQYELL (356 aa)) folds into the G-alpha domain. The tract at residues 42–55 (RLLLLGAGESGKST) is G1 motif. 47-55 (GAGESGKST) contributes to the GTP binding site. Ser54 serves as a coordination point for Mg(2+). The segment at 68–90 (FNGEGGEEDPQAARSNSDGEKAT) is disordered. Positions 196 to 204 (DLLRCRVLT) are G2 motif. GTP is bound by residues 197-204 (LLRCRVLT), 223-227 (DVGGQ), 292-295 (NKQD), and Ala366. Thr204 serves as a coordination point for Mg(2+). The tract at residues 219–228 (FHMFDVGGQR) is G3 motif. The interval 288–295 (ILFLNKQD) is G4 motif. Residues 364 to 369 (TCAVDT) are G5 motif.

It belongs to the G-alpha family. G(s) subfamily. Heterotrimeric G proteins are composed of 3 units; alpha, beta and gamma. The alpha chain contains the guanine nucleotide binding site. Interacts with CRY1; the interaction may block GPCR-mediated regulation of cAMP concentrations. Interacts with ADCY6 and stimulates its adenylyl cyclase activity. Interacts with ADCY2 and ADCY5. Stimulates the ADCY5 adenylyl cyclase activity. Interaction with SASH1.

The protein resides in the cell membrane. Functionally, guanine nucleotide-binding proteins (G proteins) function as transducers in numerous signaling pathways controlled by G protein-coupled receptors (GPCRs). Signaling involves the activation of adenylyl cyclases, resulting in increased levels of the signaling molecule cAMP. GNAS functions downstream of several GPCRs, including beta-adrenergic receptors. Stimulates the Ras signaling pathway via RAPGEF2. The chain is Guanine nucleotide-binding protein G(s) subunit alpha (GNAS) from Cricetulus griseus (Chinese hamster).